The chain runs to 130 residues: Profilin-12 (130 aa).

A disulfide bridge links C13 with C115. The Involved in PIP2 interaction motif lies at 81-97 (AVIRGKKGSGGITVKKT). T111 is subject to Phosphothreonine.

The protein belongs to the profilin family. Occurs in many kinds of cells as a complex with monomeric actin in a 1:1 ratio. Phosphorylated by MAP kinases.

It localises to the cytoplasm. Its subcellular location is the cytoskeleton. Functionally, binds to actin and affects the structure of the cytoskeleton. At high concentrations, profilin prevents the polymerization of actin, whereas it enhances it at low concentrations. This is Profilin-12 from Zea mays (Maize).